The primary structure comprises 327 residues: Beta-ketoacyl-[acyl-carrier-protein] synthase III (327 aa).

Active-site residues include C114 and H254. The segment at 255–259 (QANRR) is ACP-binding. N284 is a catalytic residue.

Belongs to the thiolase-like superfamily. FabH family. As to quaternary structure, homodimer.

It localises to the cytoplasm. The catalysed reaction is malonyl-[ACP] + acetyl-CoA + H(+) = 3-oxobutanoyl-[ACP] + CO2 + CoA. It participates in lipid metabolism; fatty acid biosynthesis. Catalyzes the condensation reaction of fatty acid synthesis by the addition to an acyl acceptor of two carbons from malonyl-ACP. Catalyzes the first condensation reaction which initiates fatty acid synthesis and may therefore play a role in governing the total rate of fatty acid production. Possesses both acetoacetyl-ACP synthase and acetyl transacylase activities. Its substrate specificity determines the biosynthesis of branched-chain and/or straight-chain of fatty acids. The sequence is that of Beta-ketoacyl-[acyl-carrier-protein] synthase III from Lactobacillus helveticus (strain DPC 4571).